The chain runs to 470 residues: 6-phospho-beta-galactosidase (470 aa).

Gln19, His116, Asn159, Glu160, and Asn297 together coordinate D-galactose 6-phosphate. The active-site Proton donor is Glu160. Residue Glu375 is the Nucleophile of the active site. D-galactose 6-phosphate contacts are provided by Ser430, Trp431, Lys437, and Tyr439.

Belongs to the glycosyl hydrolase 1 family.

The catalysed reaction is a 6-phospho-beta-D-galactoside + H2O = D-galactose 6-phosphate + an alcohol. It participates in carbohydrate metabolism; lactose degradation; D-galactose 6-phosphate and beta-D-glucose from lactose 6-phosphate: step 1/1. The sequence is that of 6-phospho-beta-galactosidase from Staphylococcus aureus (strain COL).